The sequence spans 362 residues: Homeobox-leucine zipper protein HOX11 (362 aa).

Residues 27–45 are compositionally biased toward basic and acidic residues; sequence REEAAEAGRRDHEVRRELE. Positions 27–179 are disordered; sequence REEAAEAGRR…DDGGSARKKL (153 aa). The segment covering 64-75 has biased composition (low complexity); it reads LTLLPMVPGLGL. Positions 126–135 are enriched in polar residues; the sequence is LSSSPNNSAG. The segment covering 145 to 160 has biased composition (gly residues); sequence HGLGGNDAAPGGGGGD. Residues 174 to 233 constitute a DNA-binding region (homeobox); sequence SARKKLRLSKEQSAFLEESFKEHSTLNPKQKLALAKQLNLRPRQVEVWFQNRRARTKLKQ. The tract at residues 232–276 is leucine-zipper; sequence KQTEVDCEYLKRCCETLTEENRRLQKELAELRALKTVHPFYMHLP. Residues 301–330 form a disordered region; the sequence is AATSSTAAPPAAPSSGGIAATSSSAAAAAA.

This sequence belongs to the HD-ZIP homeobox family. Class II subfamily. Expressed in stems, leaf sheaths and blades and panicles.

The protein resides in the nucleus. In terms of biological role, probable transcription factor. The sequence is that of Homeobox-leucine zipper protein HOX11 (HOX11) from Oryza sativa subsp. japonica (Rice).